Reading from the N-terminus, the 185-residue chain is Ribosome-recycling factor (185 aa).

This sequence belongs to the RRF family.

The protein localises to the cytoplasm. Its function is as follows. Responsible for the release of ribosomes from messenger RNA at the termination of protein biosynthesis. May increase the efficiency of translation by recycling ribosomes from one round of translation to another. This is Ribosome-recycling factor from Vibrio parahaemolyticus serotype O3:K6 (strain RIMD 2210633).